Consider the following 372-residue polypeptide: Protein zntB (372 aa).

Transmembrane regions (helical) follow at residues 15 to 35 (LIMC…VIFI), 42 to 62 (LLGH…FMDL), and 70 to 90 (IGFY…AVIL). Residues 99–166 (ESGDSNHAHS…IAKSKNKKKS (68 aa)) are disordered. The segment covering 114 to 124 (IEKHSSEKKEV) has biased composition (basic and acidic residues). The stretch at 133-167 (NGKDKKQKQQKQKQQKQQQQQKQNIAKSKNKKKSK) forms a coiled coil. Positions 137 to 146 (KKQKQQKQKQ) are enriched in basic residues. The segment covering 147-159 (QKQQQQQKQNIAK) has biased composition (low complexity). The next 5 helical transmembrane spans lie at 170 to 192 (YLNS…EGVA), 207 to 229 (LMLA…IFSA), 237 to 257 (FKYC…FGLI), 271 to 291 (LAAV…PAAF), and 301 to 321 (FSNI…HSML). The segment at 328–372 (AGDGGHGHSHGGHGHSHGHGHSHGGHSHDSQHVESPQSSSFNAFA) is disordered. The segment covering 334 to 352 (GHSHGGHGHSHGHGHSHGG) has biased composition (basic residues). The segment covering 360–372 (VESPQSSSFNAFA) has biased composition (polar residues).

This sequence belongs to the ZIP transporter (TC 2.A.5) family. ZupT subfamily.

Its subcellular location is the membrane. In terms of biological role, may transport divalent cations. May participate, with dstA, in the regulation of the differentiation of stalk cells during development. This Dictyostelium discoideum (Social amoeba) protein is Protein zntB (zntB).